The following is a 309-amino-acid chain: 2-phospho-L-lactate transferase (309 aa).

7,8-didemethyl-8-hydroxy-5-deazariboflavin contacts are provided by D50 and K89.

It belongs to the CofD family. In terms of assembly, homodimer. The cofactor is Mg(2+).

It carries out the reaction (2S)-lactyl-2-diphospho-5'-guanosine + 7,8-didemethyl-8-hydroxy-5-deazariboflavin = oxidized coenzyme F420-0 + GMP + H(+). It functions in the pathway cofactor biosynthesis; coenzyme F420 biosynthesis. In terms of biological role, catalyzes the transfer of the 2-phospholactate moiety from (2S)-lactyl-2-diphospho-5'-guanosine to 7,8-didemethyl-8-hydroxy-5-deazariboflavin (FO) with the formation of oxidized coenzyme F420-0 and GMP. The chain is 2-phospho-L-lactate transferase from Methanococcus maripaludis (strain C5 / ATCC BAA-1333).